Reading from the N-terminus, the 318-residue chain is Aldo-keto reductase family 1 member C21 (318 aa).

Residue 20–24 participates in NADP(+) binding; it reads GFGTA. Residue lysine 31 participates in substrate binding. Aspartate 50 is an NADP(+) binding site. The active-site Proton donor is the tyrosine 55. A substrate-binding site is contributed by histidine 117. NADP(+) contacts are provided by residues 166-167, glutamine 190, 216-224, and 270-280; these read SN, YGVLGTQRY, and TSLKEERIKEN.

Belongs to the aldo/keto reductase family. As to quaternary structure, monomer.

The protein localises to the cytoplasm. The enzyme catalyses androsterone + NADP(+) = 5alpha-androstan-3,17-dione + NADPH + H(+). It carries out the reaction androsterone + NAD(+) = 5alpha-androstan-3,17-dione + NADH + H(+). Its function is as follows. NADP-dependent 17-alpha-hydroxysteroid dehydrogenase that converts 5-alpha-androstane-3,17-dione into androsterone. Has lower 3-alpha-hydroxysteroid dehydrogenase activity. Has broad substrate specificity and acts on various 17-alpha-hydroxysteroids, 17-ketosteroids, 3-alpha hydroxysteroids and 3-ketosteroids. Reduction of keto groups is strictly stereoselective. Reduction of 17-ketosteroids yields only 17-alpha-hydroxysteroids. Likewise, reduction of 3-ketosteroids yields only 3-alpha-hydroxysteroids. This chain is Aldo-keto reductase family 1 member C21 (Akr1c21), found in Rattus norvegicus (Rat).